A 174-amino-acid polypeptide reads, in one-letter code: MKKVVKYLISLILAIIIVLFVQTFVIVGHVIPNNDMSPTLNKGDRVIVNKIKVTFNQLNNGDIITYRRGNEIYTSRIIAKPGQSMAFRQGQLYRDDRPVDASYAKNRKIKDFSLRNFKELDGDIIPPNNFVVLNDHDNNQHDSRQFGLIDKKDIIGNISLRYYPFSKWTIQFKS.

Residues 1 to 7 (MKKVVKY) lie on the Cytoplasmic side of the membrane. A helical membrane pass occupies residues 8-28 (LISLILAIIIVLFVQTFVIVG). Over 29–174 (HVIPNNDMSP…FSKWTIQFKS (146 aa)) the chain is Extracellular.

It belongs to the peptidase S26 family.

The protein resides in the cell membrane. Catalytically inactive. In Staphylococcus aureus (strain Mu50 / ATCC 700699), this protein is Inactive signal peptidase IA (spsA).